The primary structure comprises 357 residues: MATTLSSSSLFIQFRGRRYNSLSSFNNLQKRTVLSLSCALSSQGGDMIPPEGKSNDRNSAFDFKSYMIRKAESVSAALNVSVPLQEPLTIQEAVRYSLLAGGKRVRPLLCIAACELVGGDEATAMSAACAVEMIHTSSLIHDDLPCMDDADLRRGKPTNHKEFGEDMAVLAGDALLALAFEHMTFVSNGLVAPERMIRAVMELAKAIGTKGLVAGQVTDLCSQGLNPDDVGLERLEFIHLHKTAALLEAAAVLGAIMGGGTEEEIEKLRKYARCIGLLFQVVDDILDVTESTKELGKTAGKDVMAGKLTYPRLIGLERSREVAEKLRREAAEQLLGFDSDKAAPLVALASYIACRHN.

Residues 1-37 constitute a chloroplast transit peptide; the sequence is MATTLSSSSLFIQFRGRRYNSLSSFNNLQKRTVLSLS. Lys103, Arg106, and His135 together coordinate isopentenyl diphosphate. 2 residues coordinate Mg(2+): Asp142 and Asp148. Position 153 (Arg153) interacts with dimethylallyl diphosphate. Arg154 lines the isopentenyl diphosphate pocket. Positions 242, 243, 280, 297, and 307 each coordinate dimethylallyl diphosphate.

Belongs to the FPP/GGPP synthase family. In terms of assembly, monomer. It depends on Mg(2+) as a cofactor.

Its subcellular location is the plastid. The protein resides in the chloroplast. It catalyses the reaction isopentenyl diphosphate + dimethylallyl diphosphate = (2E)-geranyl diphosphate + diphosphate. It carries out the reaction isopentenyl diphosphate + (2E)-geranyl diphosphate = (2E,6E)-farnesyl diphosphate + diphosphate. The enzyme catalyses isopentenyl diphosphate + (2E,6E)-farnesyl diphosphate = (2E,6E,10E)-geranylgeranyl diphosphate + diphosphate. It functions in the pathway isoprenoid biosynthesis; farnesyl diphosphate biosynthesis; farnesyl diphosphate from geranyl diphosphate and isopentenyl diphosphate: step 1/1. It participates in isoprenoid biosynthesis; geranyl diphosphate biosynthesis; geranyl diphosphate from dimethylallyl diphosphate and isopentenyl diphosphate: step 1/1. The protein operates within isoprenoid biosynthesis; geranylgeranyl diphosphate biosynthesis; geranylgeranyl diphosphate from farnesyl diphosphate and isopentenyl diphosphate: step 1/1. Functionally, catalyzes the trans-addition of the three molecules of IPP onto DMAPP to form geranylgeranyl pyrophosphate. In Arabidopsis thaliana (Mouse-ear cress), this protein is Geranylgeranyl pyrophosphate synthase 11, chloroplastic.